Reading from the N-terminus, the 417-residue chain is Lipoyl synthase, mitochondrial (417 aa).

Residues 1–26 (MAVCARGLRCLGTPAVSLRLAASRSY) constitute a mitochondrion transit peptide. Residues 27-61 (ATTTPPDPAIPNTPGAAATSSPAKRPRTSFQDKLN) form a disordered region. The span at 44-58 (ATSSPAKRPRTSFQD) shows a compositional bias: polar residues. 7 residues coordinate [4Fe-4S] cluster: C134, C139, C145, C165, C169, C172, and S380. One can recognise a Radical SAM core domain in the interval 148-369 (GGSKSAATAT…KEKALEMGFL (222 aa)). The interval 398-417 (ESTGPGSASVQDVATGDLVR) is disordered.

The protein belongs to the radical SAM superfamily. Lipoyl synthase family. The cofactor is [4Fe-4S] cluster.

Its subcellular location is the mitochondrion. The catalysed reaction is [[Fe-S] cluster scaffold protein carrying a second [4Fe-4S](2+) cluster] + N(6)-octanoyl-L-lysyl-[protein] + 2 oxidized [2Fe-2S]-[ferredoxin] + 2 S-adenosyl-L-methionine + 4 H(+) = [[Fe-S] cluster scaffold protein] + N(6)-[(R)-dihydrolipoyl]-L-lysyl-[protein] + 4 Fe(3+) + 2 hydrogen sulfide + 2 5'-deoxyadenosine + 2 L-methionine + 2 reduced [2Fe-2S]-[ferredoxin]. It participates in protein modification; protein lipoylation via endogenous pathway; protein N(6)-(lipoyl)lysine from octanoyl-[acyl-carrier-protein]: step 2/2. Its function is as follows. Catalyzes the radical-mediated insertion of two sulfur atoms into the C-6 and C-8 positions of the octanoyl moiety bound to the lipoyl domains of lipoate-dependent enzymes, thereby converting the octanoylated domains into lipoylated derivatives. This Uncinocarpus reesii (strain UAMH 1704) protein is Lipoyl synthase, mitochondrial.